The following is a 524-amino-acid chain: Lysine--tRNA ligase (524 aa).

The 'HIGH' region signature appears at 39–47 (ASGIPHMGS). The short motif at 294 to 298 (KISKS) is the 'KMSKS' region element. Lys297 provides a ligand contact to ATP.

The protein belongs to the class-I aminoacyl-tRNA synthetase family.

It localises to the cytoplasm. It catalyses the reaction tRNA(Lys) + L-lysine + ATP = L-lysyl-tRNA(Lys) + AMP + diphosphate. This is Lysine--tRNA ligase (lysS) from Cenarchaeum symbiosum.